The sequence spans 1220 residues: Polycomb protein Sfmbt (1220 aa).

The FCS-type zinc finger occupies 322 to 357 (PIQKDGMAVCKRCGAIGVKHTFYTKSRRFCSMACAR). Residues C331, C334, C351, and C355 each contribute to the Zn(2+) site. 2 disordered regions span residues 371–399 (GDQATTSSPDPGAGSESADLPGDQQQSQS) and 464–483 (DATAPGSTEEGASTPNSYLS). Residues 473–482 (EGASTPNSYL) show a composition bias toward polar residues. MBT repeat units follow at residues 536 to 647 (YDWL…LIPP), 655 to 753 (KDWK…LAAP), 761 to 871 (LAGR…VTPP), and 879 to 975 (FTWE…LEGP). Disordered stretches follow at residues 976 to 1024 (PRVA…IALK) and 1050 to 1092 (NNQP…AGSG). A compositionally biased stretch (basic residues) spans 991 to 1000 (KIQRKRKPKK). Over residues 1052–1068 (QPEEEGDEEDPDADGDG) the composition is skewed to acidic residues. Positions 1071–1082 (STSHISEQSTTQ) are enriched in polar residues. A compositionally biased stretch (low complexity) spans 1083 to 1092 (SSSDLIAGSG). The SAM domain occupies 1140–1203 (WNVYDVSQFL…SDLIAQLKCK (64 aa)).

As to quaternary structure, interacts with pho as a component of the pho-repressive complex (PhoRC).

It localises to the nucleus. Its function is as follows. Polycomb group (PcG) protein that binds to the Polycomb response elements (PREs) found in the regulatory regions of many genes. PcG proteins act by forming multiprotein complexes, which are required to maintain the transcriptionally repressive state of homeotic genes throughout development. PcG proteins are not required to initiate repression, but to maintain it during later stages of development. They probably act via the methylation of histones, rendering chromatin heritably changed in its expressibility. Necessary but not sufficient to recruit a functional PcG repressive complex that represses target genes, suggesting that the recruitment of the distinct PRC1 complex is also required to allow a subsequent repression. This chain is Polycomb protein Sfmbt, found in Drosophila melanogaster (Fruit fly).